Consider the following 467-residue polypeptide: 3-isopropylmalate dehydratase large subunit (467 aa).

[4Fe-4S] cluster-binding residues include cysteine 347, cysteine 407, and cysteine 410.

It belongs to the aconitase/IPM isomerase family. LeuC type 1 subfamily. In terms of assembly, heterodimer of LeuC and LeuD. Requires [4Fe-4S] cluster as cofactor.

The enzyme catalyses (2R,3S)-3-isopropylmalate = (2S)-2-isopropylmalate. The protein operates within amino-acid biosynthesis; L-leucine biosynthesis; L-leucine from 3-methyl-2-oxobutanoate: step 2/4. Its function is as follows. Catalyzes the isomerization between 2-isopropylmalate and 3-isopropylmalate, via the formation of 2-isopropylmaleate. The sequence is that of 3-isopropylmalate dehydratase large subunit from Pelagibacter ubique (strain HTCC1062).